The chain runs to 155 residues: Riboflavin kinase (155 aa).

ATP is bound by residues glycine 15, lysine 21, threonine 27, and asparagine 29. Mg(2+) contacts are provided by threonine 27 and asparagine 29. Catalysis depends on glutamate 79, which acts as the Nucleophile. Residues isoleucine 82, histidine 84, and tyrosine 91 each contribute to the ATP site. FMN is bound by residues arginine 104, lysine 107, and phenylalanine 109.

Monomer. Directly interacts with TNFRSF1A death domain. TNFRSF1A-binding may be supported by TRADD. In the absence of TNFRSF1A, interacts with TRADD. Independently of TNFRSF1A, interacts with the NADPH oxidase subunit CYBA. Zn(2+) serves as cofactor. The cofactor is Mg(2+). In terms of tissue distribution, detected in brain, placenta and urinary bladder.

Its subcellular location is the cytoplasm. It carries out the reaction riboflavin + ATP = FMN + ADP + H(+). It participates in cofactor biosynthesis; FMN biosynthesis; FMN from riboflavin (ATP route): step 1/1. Its function is as follows. Catalyzes the phosphorylation of riboflavin (vitamin B2) to form flavin-mononucleotide (FMN), hence rate-limiting enzyme in the synthesis of FAD. Essential for TNF-induced reactive oxygen species (ROS) production. Through its interaction with both TNFRSF1A and CYBA, physically and functionally couples TNFRSF1A to NADPH oxidase. TNF-activation of RFK may enhance the incorporation of FAD in NADPH oxidase, a critical step for the assembly and activation of NADPH oxidase. The protein is Riboflavin kinase (RFK) of Homo sapiens (Human).